The following is a 355-amino-acid chain: tRNA-specific 2-thiouridylase MnmA (355 aa).

Residues 7 to 14 (GLSGGVDS) and L33 contribute to the ATP site. The Nucleophile role is filled by C94. C94 and C193 form a disulfide bridge. G119 contributes to the ATP binding site. Positions 143 to 145 (KDQ) are interaction with tRNA. C193 (cysteine persulfide intermediate) is an active-site residue. Residues 298 to 299 (RY) form an interaction with tRNA region.

Belongs to the MnmA/TRMU family.

Its subcellular location is the cytoplasm. The catalysed reaction is S-sulfanyl-L-cysteinyl-[protein] + uridine(34) in tRNA + AH2 + ATP = 2-thiouridine(34) in tRNA + L-cysteinyl-[protein] + A + AMP + diphosphate + H(+). Its function is as follows. Catalyzes the 2-thiolation of uridine at the wobble position (U34) of tRNA, leading to the formation of s(2)U34. The chain is tRNA-specific 2-thiouridylase MnmA from Acaryochloris marina (strain MBIC 11017).